Reading from the N-terminus, the 762-residue chain is Dolichyl-phosphate-mannose--protein mannosyltransferase 4 (762 aa).

Residues 1–10 are compositionally biased toward basic residues; it reads MSVPKKRNHG. Residues 1–24 form a disordered region; sequence MSVPKKRNHGKLPPSTKDVDDPSL. At 1-53 the chain is on the lumenal side; that stretch reads MSVPKKRNHGKLPPSTKDVDDPSLKYTKAAPKCEQVAEHWLLQPLPEPESRYS. The helical transmembrane segment at 54–74 threads the bilayer; sequence FWVTIVTLLAFAARFYKIWYP. Over 75-136 the chain is Cytoplasmic; that stretch reads KEVVFDEVHF…IGYSYETHPA (62 aa). Residues 137–157 traverse the membrane as a helical segment; that stretch reads PYIAYRSFNAILGTLTVPIMF. Residues 158-166 are Lumenal-facing; the sequence is NTLKELNFR. The helical transmembrane segment at 167-187 threads the bilayer; that stretch reads AITCAFASLLVAIDTAHVTET. Topologically, residues 188 to 189 are cytoplasmic; the sequence is RL. The helical transmembrane segment at 190–210 threads the bilayer; the sequence is ILLDAILIISIAATMYCYVRF. The Lumenal segment spans residues 211-217; sequence YKCQLRQ. Residues 218–238 traverse the membrane as a helical segment; that stretch reads PFTWSWYIWLHATGLSLSFVI. Over 239 to 242 the chain is Cytoplasmic; it reads STKY. Residues 243-263 form a helical membrane-spanning segment; sequence VGVMTYSAIGFAAVVNLWQLL. The Lumenal portion of the chain corresponds to 264-283; sequence DIKAGLSLRQFMRHFSKRLN. Residues 284–304 traverse the membrane as a helical segment; sequence GLVLIPFVIYLFWFWVHFTVL. The Cytoplasmic segment spans residues 305–593; it reads NTSGPGDAFM…NGDEKKQIYF (289 aa). MIR domains lie at 331–391, 399–458, and 464–521; these read SKTV…VLPP, GQAV…FQPL, and GHVL…VDEI. The helical transmembrane segment at 594–614 threads the bilayer; it reads IGNIIGWWFQVISLAVFVGII. Residues 615–635 lie on the Lumenal side of the membrane; that stretch reads VADLITRHRGYYALNKMTREK. The helical transmembrane segment at 636–656 threads the bilayer; the sequence is LYGPLMFFFVSWCCHYFPFFL. Over 657-716 the chain is Cytoplasmic; it reads MARQKFLHHYLPAHLIACLFSGALWEVIFSDCKSLDLEKDEDISGASYERNPKVYVKPYT. The chain crosses the membrane as a helical span at residues 717–737; it reads VFLVCVSCAVAWFFVYFSPLV. Residues 738–762 lie on the Lumenal side of the membrane; it reads YGDVSLSPSEVVSREWFDIELNFSK. N759 is a glycosylation site (N-linked (GlcNAc...) asparagine).

This sequence belongs to the glycosyltransferase 39 family. Forms a functional homodimer and may form a heterodimer with PMT6. Interacts with RCR1.

Its subcellular location is the endoplasmic reticulum membrane. It catalyses the reaction a di-trans,poly-cis-dolichyl beta-D-mannosyl phosphate + L-seryl-[protein] = 3-O-(alpha-D-mannosyl)-L-seryl-[protein] + a di-trans,poly-cis-dolichyl phosphate + H(+). It carries out the reaction a di-trans,poly-cis-dolichyl beta-D-mannosyl phosphate + L-threonyl-[protein] = 3-O-(alpha-D-mannosyl)-L-threonyl-[protein] + a di-trans,poly-cis-dolichyl phosphate + H(+). It functions in the pathway protein modification; protein glycosylation. Functionally, protein O-mannosyltransferase involved in O-glycosylation which is essential for cell wall rigidity. Forms a homodimeric complex to transfer mannose from Dol-P-mannose to Ser or Thr residues on proteins. Specifically acts on secretory proteins with an ER-luminally oriented Ser/Thr-rich region flanked by a membrane anchor such as FUS1, AXL2, GAS1, KEX2, MID2, WSC1, WSC2, OPY2, PRM5, RAX2, or YNL176. In Saccharomyces cerevisiae (strain ATCC 204508 / S288c) (Baker's yeast), this protein is Dolichyl-phosphate-mannose--protein mannosyltransferase 4.